We begin with the raw amino-acid sequence, 384 residues long: 4-hydroxy-3-methylbut-2-en-1-yl diphosphate synthase (flavodoxin) (384 aa).

4 residues coordinate [4Fe-4S] cluster: C280, C283, C315, and E322.

This sequence belongs to the IspG family. [4Fe-4S] cluster is required as a cofactor.

The enzyme catalyses (2E)-4-hydroxy-3-methylbut-2-enyl diphosphate + oxidized [flavodoxin] + H2O + 2 H(+) = 2-C-methyl-D-erythritol 2,4-cyclic diphosphate + reduced [flavodoxin]. The protein operates within isoprenoid biosynthesis; isopentenyl diphosphate biosynthesis via DXP pathway; isopentenyl diphosphate from 1-deoxy-D-xylulose 5-phosphate: step 5/6. In terms of biological role, converts 2C-methyl-D-erythritol 2,4-cyclodiphosphate (ME-2,4cPP) into 1-hydroxy-2-methyl-2-(E)-butenyl 4-diphosphate. In Frankia casuarinae (strain DSM 45818 / CECT 9043 / HFP020203 / CcI3), this protein is 4-hydroxy-3-methylbut-2-en-1-yl diphosphate synthase (flavodoxin).